A 139-amino-acid chain; its full sequence is ATP synthase epsilon chain (139 aa).

The segment at 89–110 is disordered; it reads EARAEQARAEAEARRREAQSEH.

This sequence belongs to the ATPase epsilon chain family. F-type ATPases have 2 components, CF(1) - the catalytic core - and CF(0) - the membrane proton channel. CF(1) has five subunits: alpha(3), beta(3), gamma(1), delta(1), epsilon(1). CF(0) has three main subunits: a, b and c.

Its subcellular location is the cell membrane. In terms of biological role, produces ATP from ADP in the presence of a proton gradient across the membrane. The chain is ATP synthase epsilon chain from Chloroflexus aggregans (strain MD-66 / DSM 9485).